The chain runs to 288 residues: Thymidylate synthase (288 aa).

Residue Arg-21 participates in dUMP binding. Asn-51 serves as a coordination point for (6R)-5,10-methylene-5,6,7,8-tetrahydrofolate. Arg-150–Arg-151 is a dUMP binding site. Residue Cys-170 is the Nucleophile of the active site. DUMP contacts are provided by residues Arg-190–Asp-193, Asn-201, and His-231–Tyr-233. Asp-193 serves as a coordination point for (6R)-5,10-methylene-5,6,7,8-tetrahydrofolate. Ala-287 contacts (6R)-5,10-methylene-5,6,7,8-tetrahydrofolate.

It belongs to the thymidylate synthase family. Bacterial-type ThyA subfamily. As to quaternary structure, homodimer.

The protein localises to the cytoplasm. It carries out the reaction dUMP + (6R)-5,10-methylene-5,6,7,8-tetrahydrofolate = 7,8-dihydrofolate + dTMP. It participates in pyrimidine metabolism; dTTP biosynthesis. Catalyzes the reductive methylation of 2'-deoxyuridine-5'-monophosphate (dUMP) to 2'-deoxythymidine-5'-monophosphate (dTMP) while utilizing 5,10-methylenetetrahydrofolate (mTHF) as the methyl donor and reductant in the reaction, yielding dihydrofolate (DHF) as a by-product. This enzymatic reaction provides an intracellular de novo source of dTMP, an essential precursor for DNA biosynthesis. The chain is Thymidylate synthase from Aster yellows witches'-broom phytoplasma (strain AYWB).